The sequence spans 192 residues: MTEYVLLLVGTVLVNNFVLVKFLGLCPFMGVSKKLETAIGMGLATTFVLTLASVCAYLVESYILRPLGIEYLRTMSFILVIAVVVQFTEMVVHKTSPTLYRLLGIFLPLITTNCAVLGVALLNINENHNFIESIIYGFGAAVGFSLVLILFASMRERIAAADVPVPFKGASIAMITAGLMSLAFMGFTGLVK.

Transmembrane regions (helical) follow at residues 5–25 (VLLL…FLGL), 39–59 (IGMG…AYLV), 67–87 (LGIE…VVQF), 102–122 (LLGI…VALL), 134–154 (IIYG…FASM), and 171–191 (SIAM…TGLV).

This sequence belongs to the NqrDE/RnfAE family. As to quaternary structure, the complex is composed of six subunits: RnfA, RnfB, RnfC, RnfD, RnfE and RnfG.

The protein resides in the cell inner membrane. Its function is as follows. Part of a membrane-bound complex that couples electron transfer with translocation of ions across the membrane. This chain is Ion-translocating oxidoreductase complex subunit A, found in Vibrio parahaemolyticus serotype O3:K6 (strain RIMD 2210633).